A 295-amino-acid chain; its full sequence is Methionine aminopeptidase (295 aa).

His-63 is a binding site for substrate. Positions 83, 94, and 154 each coordinate a divalent metal cation. Residue His-162 coordinates substrate. A divalent metal cation-binding residues include Glu-188 and Glu-281.

It belongs to the peptidase M24A family. Methionine aminopeptidase archaeal type 2 subfamily. In terms of assembly, monomer. Co(2+) serves as cofactor. The cofactor is Zn(2+). Requires Mn(2+) as cofactor. It depends on Fe(2+) as a cofactor.

It catalyses the reaction Release of N-terminal amino acids, preferentially methionine, from peptides and arylamides.. In terms of biological role, removes the N-terminal methionine from nascent proteins. The N-terminal methionine is often cleaved when the second residue in the primary sequence is small and uncharged (Met-Ala-, Cys, Gly, Pro, Ser, Thr, or Val). The chain is Methionine aminopeptidase from Thermococcus kodakarensis (strain ATCC BAA-918 / JCM 12380 / KOD1) (Pyrococcus kodakaraensis (strain KOD1)).